The chain runs to 231 residues: Sugar fermentation stimulation protein homolog (231 aa).

Belongs to the SfsA family.

The chain is Sugar fermentation stimulation protein homolog from Geotalea uraniireducens (strain Rf4) (Geobacter uraniireducens).